The following is a 195-amino-acid chain: MPKLGMREIRRAQLIDATLLTIDQTGLAGTTLASVAQRASISTGIVSHYFGDKDGLLEATMRHVLRDLWQATSRRRRAARADPRSKLRAVVAANFDAEQTSGPVMKTWLAFWSESMHKPQLRRLQHVNTRRLYSNLCADFSKALPRAAARRAASGLAALIDGLWLRGALSGEPFDTKAALRTANDYIDLVLASRE.

The HTH tetR-type domain occupies 8 to 68 (EIRRAQLIDA…ATMRHVLRDL (61 aa)). The H-T-H motif DNA-binding region spans 31–50 (TLASVAQRASISTGIVSHYF).

It functions in the pathway amine and polyamine biosynthesis; betaine biosynthesis via choline pathway [regulation]. In terms of biological role, repressor involved in the biosynthesis of the osmoprotectant glycine betaine. It represses transcription of the choline transporter BetT and the genes of BetAB involved in the synthesis of glycine betaine. The protein is HTH-type transcriptional regulator BetI of Paraburkholderia xenovorans (strain LB400).